Reading from the N-terminus, the 370-residue chain is N-acetyldiaminopimelate deacetylase (370 aa).

D67 is an active-site residue. The active-site Proton acceptor is the E126.

It belongs to the peptidase M20A family. N-acetyldiaminopimelate deacetylase subfamily.

The catalysed reaction is N-acetyl-(2S,6S)-2,6-diaminopimelate + H2O = (2S,6S)-2,6-diaminopimelate + acetate. It functions in the pathway amino-acid biosynthesis; L-lysine biosynthesis via DAP pathway; LL-2,6-diaminopimelate from (S)-tetrahydrodipicolinate (acetylase route): step 3/3. Functionally, catalyzes the conversion of N-acetyl-diaminopimelate to diaminopimelate and acetate. This Exiguobacterium sibiricum (strain DSM 17290 / CCUG 55495 / CIP 109462 / JCM 13490 / 255-15) protein is N-acetyldiaminopimelate deacetylase.